We begin with the raw amino-acid sequence, 454 residues long: Macrophage scavenger receptor types I and II (454 aa).

The segment at 1 to 22 (MAQWDSFTDQQEDTDSCSESVK) is disordered. Over 1 to 50 (MAQWDSFTDQQEDTDSCSESVKFDARSNTALLPPNPKNGPPLQEKLKSFK) the chain is Cytoplasmic. The residue at position 27 (S27) is a Phosphoserine. The chain crosses the membrane as a helical; Signal-anchor for type II membrane protein span at residues 51-73 (AALIALYLLVFAVLIPIIAIMAA). Positions 74–109 (QLLKWEMKNCTVGSINANSVSSSLLGRGNDSEHEVR) are spacer. Residues 74 to 454 (QLLKWEMKNC…GEDAGVTCTL (381 aa)) lie on the Extracellular side of the membrane. N-linked (GlcNAc...) asparagine glycosylation is found at N82, N102, N143, N184, N221, N249, and N267. A coiled-coil region spans residues 199 to 256 (VKFQENTLKGQEEISKLKERVHNASAEIMSMKEEQVHLEQEIKREVKVLNNITNDLRL). The disordered stretch occupies residues 267–347 (NITLIQGPPG…KGEKGSGSIL (81 aa)). Residues 273 to 344 (GPPGPPGEKG…KGQKGEKGSG (72 aa)) form the Collagen-like domain. One can recognise an SRCR domain in the interval 353 to 453 (VRLVGGRGPH…HGEDAGVTCT (101 aa)). 3 cysteine pairs are disulfide-bonded: C378–C442, C391–C452, and C422–C432.

Homotrimer. Interacts with MYO18A.

The protein resides in the membrane. Its function is as follows. Membrane glycoproteins implicated in the pathologic deposition of cholesterol in arterial walls during atherogenesis. Two types of receptor subunits exist. These receptors mediate the endocytosis of a diverse group of macromolecules, including modified low density lipoproteins (LDL). The sequence is that of Macrophage scavenger receptor types I and II (MSR1) from Oryctolagus cuniculus (Rabbit).